The sequence spans 180 residues: Shikimate kinase (180 aa).

14-19 (GAGKST) contacts ATP. Serine 18 lines the Mg(2+) pocket. Aspartate 36, arginine 60, and glycine 82 together coordinate substrate. Residue arginine 120 participates in ATP binding. Arginine 139 is a binding site for substrate.

It belongs to the shikimate kinase family. As to quaternary structure, monomer. Requires Mg(2+) as cofactor.

Its subcellular location is the cytoplasm. It carries out the reaction shikimate + ATP = 3-phosphoshikimate + ADP + H(+). Its pathway is metabolic intermediate biosynthesis; chorismate biosynthesis; chorismate from D-erythrose 4-phosphate and phosphoenolpyruvate: step 5/7. Its function is as follows. Catalyzes the specific phosphorylation of the 3-hydroxyl group of shikimic acid using ATP as a cosubstrate. This Chromohalobacter salexigens (strain ATCC BAA-138 / DSM 3043 / CIP 106854 / NCIMB 13768 / 1H11) protein is Shikimate kinase.